The chain runs to 65 residues: Large ribosomal subunit protein bL35 (65 aa).

Belongs to the bacterial ribosomal protein bL35 family.

In Xanthomonas campestris pv. campestris (strain ATCC 33913 / DSM 3586 / NCPPB 528 / LMG 568 / P 25), this protein is Large ribosomal subunit protein bL35.